The chain runs to 203 residues: A-type ATP synthase subunit E (203 aa).

This sequence belongs to the V-ATPase E subunit family. Has multiple subunits with at least A(3), B(3), C, D, E, F, H, I and proteolipid K(x).

It is found in the cell membrane. Functionally, component of the A-type ATP synthase that produces ATP from ADP in the presence of a proton gradient across the membrane. The chain is A-type ATP synthase subunit E from Methanococcus vannielii (strain ATCC 35089 / DSM 1224 / JCM 13029 / OCM 148 / SB).